The following is a 196-amino-acid chain: Large ribosomal subunit protein eL15 (196 aa).

The interval 154–196 (PGHRGRSERGLTSAGVKGRGMRRRGKGTEKCRPSVRANANRAK) is disordered.

This sequence belongs to the eukaryotic ribosomal protein eL15 family.

In Methanospirillum hungatei JF-1 (strain ATCC 27890 / DSM 864 / NBRC 100397 / JF-1), this protein is Large ribosomal subunit protein eL15.